The primary structure comprises 1524 residues: DNA-directed RNA polymerase subunit beta' (1524 aa).

4 residues coordinate Zn(2+): cysteine 58, cysteine 60, cysteine 73, and cysteine 76. Residues aspartate 739, aspartate 741, and aspartate 743 each contribute to the Mg(2+) site. Zn(2+)-binding residues include cysteine 1112, cysteine 1194, cysteine 1201, and cysteine 1204. Residues 1502 to 1524 (AVEAKEKEAPRRPVRREQPGKGL) are disordered.

Belongs to the RNA polymerase beta' chain family. In terms of assembly, the RNAP catalytic core consists of 2 alpha, 1 beta, 1 beta' and 1 omega subunit. When a sigma factor is associated with the core the holoenzyme is formed, which can initiate transcription. The cofactor is Mg(2+). Requires Zn(2+) as cofactor.

It carries out the reaction RNA(n) + a ribonucleoside 5'-triphosphate = RNA(n+1) + diphosphate. In terms of biological role, DNA-dependent RNA polymerase catalyzes the transcription of DNA into RNA using the four ribonucleoside triphosphates as substrates. The sequence is that of DNA-directed RNA polymerase subunit beta' from Thermus aquaticus.